Reading from the N-terminus, the 351-residue chain is Dihydroorotate dehydrogenase (quinone) (351 aa).

Residues 61-65 and threonine 85 contribute to the FMN site; that span reads AGLDK. Lysine 65 contributes to the substrate binding site. 110-114 is a substrate binding site; the sequence is NRMGF. 2 residues coordinate FMN: asparagine 139 and asparagine 172. Substrate is bound at residue asparagine 172. Catalysis depends on serine 175, which acts as the Nucleophile. Asparagine 177 contributes to the substrate binding site. The FMN site is built by lysine 217 and threonine 245. Residue 246–247 participates in substrate binding; it reads NT. FMN is bound by residues glycine 268, glycine 297, and 318-319; that span reads YS.

This sequence belongs to the dihydroorotate dehydrogenase family. Type 2 subfamily. In terms of assembly, monomer. FMN is required as a cofactor.

It is found in the cell membrane. It catalyses the reaction (S)-dihydroorotate + a quinone = orotate + a quinol. The protein operates within pyrimidine metabolism; UMP biosynthesis via de novo pathway; orotate from (S)-dihydroorotate (quinone route): step 1/1. Its function is as follows. Catalyzes the conversion of dihydroorotate to orotate with quinone as electron acceptor. The sequence is that of Dihydroorotate dehydrogenase (quinone) from Xanthomonas oryzae pv. oryzae (strain PXO99A).